The following is a 340-amino-acid chain: Melanin-concentrating hormone receptor 2 (340 aa).

At 1–39 (MNPFHASCWNTSAELLNKSWNKEFAYQTASVVDTVILPS) the chain is on the extracellular side. Asn-10 and Asn-17 each carry an N-linked (GlcNAc...) asparagine glycan. A helical transmembrane segment spans residues 40–60 (MIGIICSTGLVGNILIVFTII). The Cytoplasmic segment spans residues 61–69 (RSRKKTVPD). Residues 70–90 (IYICNLAVADLVHIVGMPFLI) traverse the membrane as a helical segment. Residues 91-104 (HQWARGGEWVFGGP) lie on the Extracellular side of the membrane. Residues 105–129 (LCTIITSLDTCNQFACSAIMTVMSV) traverse the membrane as a helical segment. The Cytoplasmic portion of the chain corresponds to 130-154 (DRYFALVQPFRLTRWRTRYKTIRIN). Residues 155–175 (LGLWAASFILALPVWVYSKVI) form a helical membrane-spanning segment. The Extracellular segment spans residues 176-200 (KFKDGVESCAFDLTSPDDVLWYTLY). The chain crosses the membrane as a helical span at residues 201-221 (LTITTFFFPLPLILVCYILIL). At 222–252 (CYTWEMYQQNKDARCCNPSVPKQRVMKLTKM) the chain is on the cytoplasmic side. A helical transmembrane segment spans residues 253-273 (VLVLVVVFILSAAPYHVIQLV). Over 274-288 (NLQMEQPTLAFYVGY) the chain is Extracellular. A helical transmembrane segment spans residues 289 to 309 (YLSICLSYASSSINPFLYILL). Over 310–340 (SGNFQKRLPQIQRRATEKEINNMGNTLKSHF) the chain is Cytoplasmic.

The protein belongs to the G-protein coupled receptor 1 family. As to expression, specifically expressed in the brain, with highest levels in cerebral cortex, hippocampus and amygdala. No expression detected in the cerebellum, thalamus or hypothalamus.

The protein resides in the cell membrane. Its function is as follows. Receptor for melanin-concentrating hormone, coupled to G proteins that activate phosphoinositide hydrolysis. The sequence is that of Melanin-concentrating hormone receptor 2 (MCHR2) from Homo sapiens (Human).